Here is a 65-residue protein sequence, read N- to C-terminus: Disintegrin VLO4 (65 aa).

Positions 1–65 (MNSGNPCCDP…PDCPRNPWKG (65 aa)) constitute a Disintegrin domain. Disulfide bonds link cysteine 7–cysteine 30, cysteine 21–cysteine 27, cysteine 26–cysteine 51, and cysteine 39–cysteine 58. The short motif at 43-45 (RGD) is the Cell attachment site element.

The protein belongs to the disintegrin family. Dimeric disintegrin subfamily. In terms of assembly, homodimer; disulfide-linked. As to expression, expressed by the venom gland.

The protein resides in the secreted. Poor inhibitor of platelet aggregation. The disintegrin inhibits the adhesion of cells expressing the RGD-dependent integrin alpha-5/beta-1 (ITGA5/ITGB1) to immobilized fibronectin. Inhibition on alpha-2b/beta-3 (ITGA2B/ITGB3) is low. This Macrovipera lebetina obtusa (Levant blunt-nosed viper) protein is Disintegrin VLO4.